The sequence spans 407 residues: Ribosomal protein uL3-like (407 aa).

The span at 1–31 (MSHRKFSAPRHGHLGFLPHKRSHRHRGKVKT) shows a compositional bias: basic residues. Disordered stretches follow at residues 1-35 (MSHR…WPRD) and 387-407 (AFMG…SGDL).

This sequence belongs to the universal ribosomal protein uL3 family. Component of the large ribosomal subunit in striated muscle cells.

Functionally, heart- and skeletal muscle-specific component of the ribosome, which regulates muscle function. Component of the large ribosomal subunit in striated muscle cells: replaces the RPL3 paralog in the ribosome in these cells. The ribosome is a large ribonucleoprotein complex responsible for the synthesis of proteins in the cell. Inhibits myotube growth and muscle function. The polypeptide is Ribosomal protein uL3-like (Homo sapiens (Human)).